The chain runs to 139 residues: FAD synthase (139 aa).

Residues 9–10 (TF), 14–17 (HPGH), and asparagine 92 each bind ATP.

Belongs to the archaeal FAD synthase family. As to quaternary structure, homodimer. A divalent metal cation serves as cofactor.

It catalyses the reaction FMN + ATP + H(+) = FAD + diphosphate. It functions in the pathway cofactor biosynthesis; FAD biosynthesis; FAD from FMN: step 1/1. In terms of biological role, catalyzes the transfer of the AMP portion of ATP to flavin mononucleotide (FMN) to produce flavin adenine dinucleotide (FAD) coenzyme. The protein is FAD synthase of Methanocella paludicola (strain DSM 17711 / JCM 13418 / NBRC 101707 / SANAE).